The following is a 534-amino-acid chain: CTP synthase (534 aa).

The segment at 1-267 is amidoligase domain; that stretch reads MTKYIFVTGG…DQIVCDHLKL (267 aa). Position 13 (Ser-13) interacts with CTP. Ser-13 contacts UTP. 14 to 19 provides a ligand contact to ATP; that stretch reads SIGKGI. Position 54 (Tyr-54) interacts with L-glutamine. Asp-71 serves as a coordination point for ATP. Mg(2+)-binding residues include Asp-71 and Glu-141. CTP is bound by residues 148–150, 188–193, and Lys-224; these read DIE and KTKPTQ. Residues 188–193 and Lys-224 contribute to the UTP site; that span reads KTKPTQ. 240–242 provides a ligand contact to ATP; it reads RDV. The 243-residue stretch at 292–534 folds into the Glutamine amidotransferase type-1 domain; the sequence is KIALVGKYVE…FVTAAIKNSN (243 aa). Gly-354 is a binding site for L-glutamine. The active-site Nucleophile; for glutamine hydrolysis is Cys-381. Residues 382–385, Glu-405, and Arg-463 each bind L-glutamine; that span reads LGMQ. Catalysis depends on residues His-508 and Glu-510.

This sequence belongs to the CTP synthase family. In terms of assembly, homotetramer.

It carries out the reaction UTP + L-glutamine + ATP + H2O = CTP + L-glutamate + ADP + phosphate + 2 H(+). The enzyme catalyses L-glutamine + H2O = L-glutamate + NH4(+). The catalysed reaction is UTP + NH4(+) + ATP = CTP + ADP + phosphate + 2 H(+). The protein operates within pyrimidine metabolism; CTP biosynthesis via de novo pathway; CTP from UDP: step 2/2. Its activity is regulated as follows. Allosterically activated by GTP, when glutamine is the substrate; GTP has no effect on the reaction when ammonia is the substrate. The allosteric effector GTP functions by stabilizing the protein conformation that binds the tetrahedral intermediate(s) formed during glutamine hydrolysis. Inhibited by the product CTP, via allosteric rather than competitive inhibition. Its function is as follows. Catalyzes the ATP-dependent amination of UTP to CTP with either L-glutamine or ammonia as the source of nitrogen. Regulates intracellular CTP levels through interactions with the four ribonucleotide triphosphates. The protein is CTP synthase of Streptococcus pyogenes serotype M18 (strain MGAS8232).